The following is a 254-amino-acid chain: Type III pantothenate kinase (254 aa).

6–13 (DVGNTNIV) serves as a coordination point for ATP. A substrate-binding site is contributed by 107-110 (GADR). The active-site Proton acceptor is the Asp-109. Residue Asp-129 coordinates K(+). Thr-132 is an ATP binding site. Residue Thr-184 coordinates substrate.

It belongs to the type III pantothenate kinase family. Homodimer. NH4(+) is required as a cofactor. Requires K(+) as cofactor.

The protein localises to the cytoplasm. The enzyme catalyses (R)-pantothenate + ATP = (R)-4'-phosphopantothenate + ADP + H(+). It functions in the pathway cofactor biosynthesis; coenzyme A biosynthesis; CoA from (R)-pantothenate: step 1/5. Catalyzes the phosphorylation of pantothenate (Pan), the first step in CoA biosynthesis. In Exiguobacterium sp. (strain ATCC BAA-1283 / AT1b), this protein is Type III pantothenate kinase.